The sequence spans 532 residues: Glutamate--cysteine ligase (532 aa).

Belongs to the glutamate--cysteine ligase type 1 family. Type 1 subfamily.

It carries out the reaction L-cysteine + L-glutamate + ATP = gamma-L-glutamyl-L-cysteine + ADP + phosphate + H(+). Its pathway is sulfur metabolism; glutathione biosynthesis; glutathione from L-cysteine and L-glutamate: step 1/2. In Pseudomonas fluorescens (strain Pf0-1), this protein is Glutamate--cysteine ligase.